The following is a 389-amino-acid chain: Mitochondrial carrier homolog 1 (389 aa).

The tract at residues Met1 to Ala78 is disordered. Over Met1 to Thr93 the chain is Mitochondrial intermembrane. Positions Gly15–Pro33 are enriched in gly residues. Arg29 carries the omega-N-methylarginine modification. Solcar repeat units lie at residues Thr81–Asp176 and Lys192–Tyr280. The helical transmembrane segment at Ala94–Leu104 threads the bilayer. Over Leu105–Arg155 the chain is Cytoplasmic. The chain crosses the membrane as a helical span at residues Leu156–Asp176. The Mitochondrial intermembrane segment spans residues Glu177–Arg209. A helical membrane pass occupies residues Met210–Arg229. Over Glu230 to Val254 the chain is Cytoplasmic. Residues Gly255–Ala279 traverse the membrane as a helical segment. At Tyr280–Ser322 the chain is on the mitochondrial intermembrane side. Residues Met323–Leu342 traverse the membrane as a helical segment. The Cytoplasmic segment spans residues Arg343–Arg371. A helical membrane pass occupies residues Gly372–Glu389.

It belongs to the mitochondrial carrier (TC 2.A.29) family. As to quaternary structure, interacts with PSEN1.

The protein localises to the mitochondrion outer membrane. Its function is as follows. Protein insertase that mediates insertion of transmembrane proteins into the mitochondrial outer membrane. Catalyzes insertion of proteins with alpha-helical transmembrane regions, such as signal-anchored, tail-anchored and multi-pass membrane proteins. Does not mediate insertion of beta-barrel transmembrane proteins. May play a role in apoptosis. This chain is Mitochondrial carrier homolog 1 (Mtch1), found in Mus musculus (Mouse).